Reading from the N-terminus, the 1305-residue chain is Contactin-associated protein like 5-4 (1305 aa).

The first 24 residues, 1–24 (MNSVRRLNSILTLVLSGLWHLGLT), serve as a signal peptide directing secretion. The Extracellular portion of the chain corresponds to 25 to 1237 (ATNYNCDEPL…LTDTVQSDSA (1213 aa)). In terms of domain architecture, F5/8 type C spans 30 to 174 (CDEPLASFLS…IGMRVEVYGC (145 aa)). Cysteines 30 and 174 form a disulfide. 2 consecutive Laminin G-like domains span residues 180 to 360 (IVGF…TFSC) and 367 to 544 (PITF…IDLC). Residue N282 is glycosylated (N-linked (GlcNAc...) asparagine). Cysteines 329 and 360 form a disulfide. N496 carries an N-linked (GlcNAc...) asparagine glycan. Disulfide bonds link C512/C544, C550/C561, and C555/C570. The EGF-like 1 domain maps to 546-583 (IKDRCLPNYCEHGGHCAQNWTTFYCNCSDTGYTGATCH). A glycan (N-linked (GlcNAc...) asparagine) is linked at N571. An intrachain disulfide couples C572 to C582. One can recognise a Fibrinogen C-terminal domain in the interval 584–790 (DSVYEQSCEV…LRCYGDRHFW (207 aa)). Residue N622 is glycosylated (N-linked (GlcNAc...) asparagine). Residues 791–956 (NAVSFTTEAS…KLMSGVTPGC (166 aa)) form the Laminin G-like 3 domain. Intrachain disulfides connect C929-C956, C960-C973, C967-C982, and C984-C994. The EGF-like 2 domain occupies 957–995 (LGHCSSYGSNCLNGGKCVEKQSGYSCDCTNSPNEGPFCQ). One can recognise a Laminin G-like 4 domain in the interval 1014 to 1198 (EPYLVIKNTS…VQGTLTESGC (185 aa)). A glycan (N-linked (GlcNAc...) asparagine) is linked at N1057. A disulfide bridge connects residues C1163 and C1198. The chain crosses the membrane as a helical span at residues 1238 to 1258 (VIGGIIALVTFVTFCVIGIMI). Over 1259-1305 (HFLYLHKQSHCTNQTKEKEYSENLSNSFRNAIDLQNTASECKREYFI) the chain is Cytoplasmic.

Belongs to the neurexin family.

It localises to the membrane. May play a role in the correct development and proper functioning of the peripheral and central nervous system and be involved in cell adhesion and intercellular communication. This Rattus norvegicus (Rat) protein is Contactin-associated protein like 5-4 (Cntnap5d).